A 364-amino-acid polypeptide reads, in one-letter code: Coproporphyrin III ferrochelatase (364 aa).

2 residues coordinate Fe-coproporphyrin III: arginine 29 and tyrosine 118. Residues histidine 169 and glutamate 250 each coordinate Fe(2+).

It belongs to the ferrochelatase family.

The protein localises to the cytoplasm. It carries out the reaction Fe-coproporphyrin III + 2 H(+) = coproporphyrin III + Fe(2+). Its pathway is porphyrin-containing compound metabolism; protoheme biosynthesis. In terms of biological role, involved in coproporphyrin-dependent heme b biosynthesis. Catalyzes the insertion of ferrous iron into coproporphyrin III to form Fe-coproporphyrin III. This is Coproporphyrin III ferrochelatase from Streptococcus pneumoniae (strain Hungary19A-6).